Consider the following 185-residue polypeptide: Transcription termination/antitermination protein NusG (185 aa).

One can recognise a KOW domain in the interval 134–162; that stretch reads PGQMVRVIDGPFNDFDGLVEEVNYEKNRL.

The protein belongs to the NusG family.

In terms of biological role, participates in transcription elongation, termination and antitermination. This is Transcription termination/antitermination protein NusG from Xylella fastidiosa (strain Temecula1 / ATCC 700964).